The chain runs to 394 residues: Potassium channel subfamily K member 18 (394 aa).

At 1–31 (MEAEEPPEARRCCPEALGKARGCCPEALGKL) the chain is on the cytoplasmic side. Residues 32-52 (LPGLCFLCCLVTYALVGAALF) traverse the membrane as a helical segment. Residue asparagine 83 is glycosylated (N-linked (GlcNAc...) asparagine). The pore-forming intramembrane region spans 114 to 140 (FLSALFFCCTVFSTVGYGHMYPVTRLG). K(+) is bound by residues threonine 127, valine 128, glycine 129, and tyrosine 130. Residues 127–132 (TVGYGH) form a selectivity filter 1 region. A helical transmembrane segment spans residues 142–162 (FLCMLYALFGIPLMFLVLTDI). Residues 163–292 (GDILATILSR…EVGQQVERLD (130 aa)) lie on the Cytoplasmic side of the membrane. The interval 210 to 215 (PQIVID) is interaction with calcineurin. An interaction with YWHAH region spans residues 261–266 (RSNSCP). Phosphoserine is present on residues serine 264 and serine 276. Residues 293–313 (IPLPVIALVVFAYISCAAAIL) traverse the membrane as a helical segment. The segment at residues 326 to 340 (FYFCFVTLTTIGFGD) is an intramembrane region (pore-forming). A selectivity filter 2 region spans residues 335 to 340 (TIGFGD). Residues 347–367 (HFFLFFSIYIIVGMEILFIAF) form a helical membrane-spanning segment. Over 368 to 394 (KLMQNRLLHTYKTLMLFVCQREVSLPW) the chain is Cytoplasmic.

This sequence belongs to the two pore domain potassium channel (TC 1.A.1.8) family. In terms of assembly, homodimer. Heterodimer with KCNK2. Heterodimer with KCNK10. Interacts with calcineurin. Interacts with YWHAH, in a phosphorylation-dependent manner. Phosphorylation of Ser-264 is required for the binding of 14-3-3eta/YWHAH. Calcineurin-mediated dephosphorylation of Ser-276 enhances channel activity. Post-translationally, N-glycosylated. Detected in brain cortex, cerebellum, dorsal root ganglion, spinal cord and testis. High expression in trigeminal ganglion (at protein level), also expressed in autonomic nervous system ganglia such as the stellate ganglion and paravertebral sympathetic ganglia. Expressed in all adult spinal cord and brain regions, with slightly higher expression in thalamus, hypothalamus, hippocampus and posterior corte (at protein level). In non-neuronal tissues, substantial expression found in lung and heart and weal expression in liver, testis, kidney, small intestine and spleen. Expressed in regulatory T cells (at protein level).

The protein resides in the cell membrane. The enzyme catalyses K(+)(in) = K(+)(out). Activated upon cell stimulation via Ca(2+)-mobilizing receptors, such as CHRM1/M1 muscarinic receptor and AGTR1/AT1a angiotensin receptor. Activated by volatile anesthetics, such as isoflurane and inhibited by local anesthetics such as bupivacaine and lidocaine. Inhibited by extracellular acidic pH. Inhibited by Zn(2+) ions. Inhibited by hydroxy-alpha-sanshool, an ingredient of Schezuan pepper. Inhibited by Ba(2+) ions. Functionally, k(+) channel that conducts outward and inward rectifying currents at depolarized and hyperpolarized membrane potentials, respectively. The outward rectifying currents are voltage-dependent, coupled to K(+) electrochemical gradient across the membrane, whereas the inward currents can be induced in response to activation of Ca(2+)-mobilizing receptors. Homo- and heterodimerizes to form functional channels with distinct regulatory and gating properties. In trigeminal ganglia sensory neurons, the heterodimers of KCNK18/TRESK and KCNK2/TREK-1 or KCNK10/TREK-2 inhibit neuronal firing and neurogenic inflammation by stabilizing the resting membrane potential at K(+) equilibrium potential as well as by regulating the threshold of action potentials and the spike frequency. In thymocytes, conducts K(+) currents upon T cell receptor (TCR) signaling leading to sustained Ca(2+) influx and NF-kappa-B activation, FOXP3 transcription and positive selection of regulatory T cell (Treg) progenitor subsets. Appears to mediate the analgesics effects of hydroxy-alpha-sanshool, a metabolite naturally present in Schezuan pepper and other Xanthoxylum plants. In Mus musculus (Mouse), this protein is Potassium channel subfamily K member 18.